Consider the following 304-residue polypeptide: HPr kinase/phosphorylase (304 aa).

Active-site residues include His136 and Lys157. 151–158 (GESGIGKS) is a binding site for ATP. Ser158 provides a ligand contact to Mg(2+). The active-site Proton acceptor; for phosphorylation activity. Proton donor; for dephosphorylation activity is the Asp175. Positions 198–207 (LEVRGIGIID) are important for the catalytic mechanism of both phosphorylation and dephosphorylation. Glu199 is a Mg(2+) binding site. The active site involves Arg240. Residues 261 to 266 (PVRPGR) form an important for the catalytic mechanism of dephosphorylation region.

Belongs to the HPrK/P family. Homohexamer. Requires Mg(2+) as cofactor.

The catalysed reaction is [HPr protein]-L-serine + ATP = [HPr protein]-O-phospho-L-serine + ADP + H(+). The enzyme catalyses [HPr protein]-O-phospho-L-serine + phosphate + H(+) = [HPr protein]-L-serine + diphosphate. Catalyzes the ATP- as well as the pyrophosphate-dependent phosphorylation of a specific serine residue in HPr, a phosphocarrier protein of the phosphoenolpyruvate-dependent sugar phosphotransferase system (PTS). HprK/P also catalyzes the pyrophosphate-producing, inorganic phosphate-dependent dephosphorylation (phosphorolysis) of seryl-phosphorylated HPr (P-Ser-HPr). The two antagonistic activities of HprK/P are regulated by several intracellular metabolites, which change their concentration in response to the absence or presence of rapidly metabolisable carbon sources (glucose, fructose, etc.) in the growth medium. Therefore, by controlling the phosphorylation state of HPr, HPrK/P is a sensor enzyme that plays a major role in the regulation of carbon metabolism and sugar transport: it mediates carbon catabolite repression (CCR), and regulates PTS-catalyzed carbohydrate uptake and inducer exclusion. The protein is HPr kinase/phosphorylase of Clostridium botulinum (strain Alaska E43 / Type E3).